The chain runs to 137 residues: Fluoride-specific ion channel FluC (137 aa).

The next 4 membrane-spanning stretches (helical) occupy residues 11-31 (IAVSLGAIAGALSRYYLSLWF), 42-62 (GTLFINITGCLAMGFFYALAL), 75-95 (LIAVGFLGAYTTFSTYALDTF), and 107-127 (GFYWAGSTILGVISIQIGIIL). Na(+) contacts are provided by Gly82 and Thr85.

Belongs to the fluoride channel Fluc/FEX (TC 1.A.43) family.

It is found in the cell inner membrane. The enzyme catalyses fluoride(in) = fluoride(out). Its activity is regulated as follows. Na(+) is not transported, but it plays an essential structural role and its presence is essential for fluoride channel function. Functionally, fluoride-specific ion channel. Important for reducing fluoride concentration in the cell, thus reducing its toxicity. This Trichormus variabilis (strain ATCC 29413 / PCC 7937) (Anabaena variabilis) protein is Fluoride-specific ion channel FluC.